The primary structure comprises 257 residues: uncharacterized protein (257 aa).

Catalysis depends on charge relay system residues Ser122 and His236.

This sequence belongs to the peptidase S9B family.

This is an uncharacterized protein from Bacillus subtilis (strain 168).